The chain runs to 254 residues: 4-hydroxy-tetrahydrodipicolinate reductase (254 aa).

Residues 8–13 (GCSGKM), aspartate 35, 86–88 (CST), and 110–113 (SANM) contribute to the NAD(+) site. The active-site Proton donor/acceptor is histidine 143. Histidine 144 lines the (S)-2,3,4,5-tetrahydrodipicolinate pocket. Lysine 147 acts as the Proton donor in catalysis. (S)-2,3,4,5-tetrahydrodipicolinate is bound at residue 153–154 (GT).

This sequence belongs to the DapB family.

The protein resides in the cytoplasm. The catalysed reaction is (S)-2,3,4,5-tetrahydrodipicolinate + NAD(+) + H2O = (2S,4S)-4-hydroxy-2,3,4,5-tetrahydrodipicolinate + NADH + H(+). It carries out the reaction (S)-2,3,4,5-tetrahydrodipicolinate + NADP(+) + H2O = (2S,4S)-4-hydroxy-2,3,4,5-tetrahydrodipicolinate + NADPH + H(+). It participates in amino-acid biosynthesis; L-lysine biosynthesis via DAP pathway; (S)-tetrahydrodipicolinate from L-aspartate: step 4/4. Functionally, catalyzes the conversion of 4-hydroxy-tetrahydrodipicolinate (HTPA) to tetrahydrodipicolinate. The protein is 4-hydroxy-tetrahydrodipicolinate reductase of Clostridium perfringens (strain ATCC 13124 / DSM 756 / JCM 1290 / NCIMB 6125 / NCTC 8237 / Type A).